Here is a 171-residue protein sequence, read N- to C-terminus: CS1 fimbrial subunit A (171 aa).

The N-terminal stretch at 1-23 (MKLKKTIGAMALATLFATMGASA) is a signal peptide.

This sequence belongs to the fimbrial CS1 protein family.

It localises to the fimbrium. Its function is as follows. Fimbriae (also called pili), polar filaments radiating from the surface of the bacterium to a length of 0.5-1.5 micrometers and numbering 100-300 per cell, enable bacteria to colonize the epithelium of specific host organs. This chain is CS1 fimbrial subunit A (csoA), found in Escherichia coli.